A 241-amino-acid chain; its full sequence is tRNA pseudouridine synthase B (241 aa).

The active-site Nucleophile is D52.

This sequence belongs to the pseudouridine synthase TruB family. Type 1 subfamily.

The catalysed reaction is uridine(55) in tRNA = pseudouridine(55) in tRNA. Its function is as follows. Responsible for synthesis of pseudouridine from uracil-55 in the psi GC loop of transfer RNAs. The polypeptide is tRNA pseudouridine synthase B (Chloroherpeton thalassium (strain ATCC 35110 / GB-78)).